We begin with the raw amino-acid sequence, 115 residues long: Iron-sulfur cluster insertion protein ErpA (115 aa).

Residues C42, C106, and C108 each coordinate iron-sulfur cluster.

This sequence belongs to the HesB/IscA family. As to quaternary structure, homodimer. Iron-sulfur cluster is required as a cofactor.

Its function is as follows. Required for insertion of 4Fe-4S clusters for at least IspG. The chain is Iron-sulfur cluster insertion protein ErpA from Baumannia cicadellinicola subsp. Homalodisca coagulata.